Consider the following 288-residue polypeptide: ATP synthase gamma chain 1 (288 aa).

This sequence belongs to the ATPase gamma chain family. F-type ATPases have 2 components, CF(1) - the catalytic core - and CF(0) - the membrane proton channel. CF(1) has five subunits: alpha(3), beta(3), gamma(1), delta(1), epsilon(1). CF(0) has three main subunits: a, b and c.

The protein localises to the cell inner membrane. Functionally, produces ATP from ADP in the presence of a proton gradient across the membrane. The gamma chain is believed to be important in regulating ATPase activity and the flow of protons through the CF(0) complex. This chain is ATP synthase gamma chain 1, found in Photobacterium profundum (strain SS9).